Reading from the N-terminus, the 156-residue chain is Snaclec subunit B (156 aa).

The signal sequence occupies residues 1–23 (MGRSIFVNLGLLVVAFSLRGSEA). Disulfide bonds link C25–C36, C53–C144, and C119–C136. A C-type lectin domain is found at 32 to 145 (YDKYCYKVFD…CKSTLPFTCK (114 aa)).

The protein belongs to the snaclec family. As to quaternary structure, heterodimer of subunits A and B; disulfide-linked. Expressed by the venom gland.

It is found in the secreted. Its function is as follows. Interferes with one step of hemostasis (modulation of platelet aggregation, or coagulation cascade, for example). This is Snaclec subunit B from Philodryas olfersii (Green snake).